The chain runs to 275 residues: Tryptophan synthase alpha chain (275 aa).

Catalysis depends on proton acceptor residues E49 and D60.

It belongs to the TrpA family. As to quaternary structure, tetramer of two alpha and two beta chains.

The catalysed reaction is (1S,2R)-1-C-(indol-3-yl)glycerol 3-phosphate + L-serine = D-glyceraldehyde 3-phosphate + L-tryptophan + H2O. It functions in the pathway amino-acid biosynthesis; L-tryptophan biosynthesis; L-tryptophan from chorismate: step 5/5. The alpha subunit is responsible for the aldol cleavage of indoleglycerol phosphate to indole and glyceraldehyde 3-phosphate. The protein is Tryptophan synthase alpha chain of Nitrosomonas europaea (strain ATCC 19718 / CIP 103999 / KCTC 2705 / NBRC 14298).